The primary structure comprises 376 residues: MEDGFGMYSHSMSCPSTASTSFSSASSSAYDPFTPSSRRSTPNELSLDLDGSCSYAAHQHSLELTPPTTSMAKYFMGQTIKQEPEQMSFGSLPTTPMKKVDGGFAAEYDLIDMNMASHHSMGTITPSNSFGLHTISPETAMGPTSYMMTPTQSLSGSEIAESSSSWSVTNESPINFFQQPKDLSFHDMDSLDLDERHHHHHNHHQHHHAQQSPMGQHFQLHSNTGASPNSMRVQRKMMLHEAQRKTSELQRAQIRESRKRAGKPESGAVDVVRRAMCKCDYPGCNKAFRRNEHLKRHKQTFHGEGPNRFSCEFCGKDQFNRQDNLNNHRKLHARPNSRNRGVEFIPEAVPIIEHEERSRKRRAPPKSKAEKRDYDF.

Positions 20–29 (TSFSSASSSA) are enriched in low complexity. Disordered regions lie at residues 20–47 (TSFS…ELSL), 197–229 (HHHH…ASPN), and 241–267 (EAQR…PESG). Over residues 34-44 (TPSSRRSTPNE) the composition is skewed to polar residues. The span at 197–209 (HHHHHNHHQHHHA) shows a compositional bias: basic residues. Positions 219 to 229 (QLHSNTGASPN) are enriched in polar residues. Positions 241–256 (EAQRKTSELQRAQIRE) are enriched in basic and acidic residues. A C2H2-type 1; degenerate zinc finger spans residues 277–301 (CKCDYPGCNKAFRRNEHLKRHKQTF). The C2H2-type 2 zinc finger occupies 309-332 (FSCEFCGKDQFNRQDNLNNHRKLH). The segment at 351 to 376 (IIEHEERSRKRRAPPKSKAEKRDYDF) is disordered. The span at 367–376 (SKAEKRDYDF) shows a compositional bias: basic and acidic residues.

It is found in the nucleus. Functionally, brlA, abaA and wetA are pivotal regulators of conidiophore development and conidium maturation. They act individually and together to regulate their own expression and that of numerous other sporulation-specific genes. Binds promoters of target genes at brlA response elements (BREs) containing the conserved sequence 5'-(C/A)(A/G)AGGG(G/A)-3'. The chain is C2H2 type master regulator of conidiophore development brlA from Hapsidospora chrysogena (Acremonium chrysogenum).